We begin with the raw amino-acid sequence, 158 residues long: SsrA-binding protein (158 aa).

The protein belongs to the SmpB family.

It localises to the cytoplasm. Its function is as follows. Required for rescue of stalled ribosomes mediated by trans-translation. Binds to transfer-messenger RNA (tmRNA), required for stable association of tmRNA with ribosomes. tmRNA and SmpB together mimic tRNA shape, replacing the anticodon stem-loop with SmpB. tmRNA is encoded by the ssrA gene; the 2 termini fold to resemble tRNA(Ala) and it encodes a 'tag peptide', a short internal open reading frame. During trans-translation Ala-aminoacylated tmRNA acts like a tRNA, entering the A-site of stalled ribosomes, displacing the stalled mRNA. The ribosome then switches to translate the ORF on the tmRNA; the nascent peptide is terminated with the 'tag peptide' encoded by the tmRNA and targeted for degradation. The ribosome is freed to recommence translation, which seems to be the essential function of trans-translation. The sequence is that of SsrA-binding protein from Roseiflexus castenholzii (strain DSM 13941 / HLO8).